The chain runs to 126 residues: MFLKATLLLGLAVLGMHVWAIQMEFVDISKDLDYFVVSVEFAVAWFNSDNTEEQAYKLLEVRRAQQKSWTMIYLMELDLGRTICKKHDEDIDNCPLQESPGERKVNCTFIVDSRPWFTQFTLLNST.

Residues 1-20 (MFLKATLLLGLAVLGMHVWA) form the signal peptide. C84 and C94 are oxidised to a cystine. Residue N106 is glycosylated (N-linked (GlcNAc...) asparagine).

Belongs to the cystatin family.

Its subcellular location is the secreted. This Bos taurus (Bovine) protein is Probable cystatin-16.